Consider the following 1458-residue polypeptide: Anaphase-promoting complex subunit 1 (1458 aa).

The tract at residues 186–210 (QSIKSSRNRRRESSFSREKNPDLTR) is disordered. Basic and acidic residues predominate over residues 196–210 (RESSFSREKNPDLTR). PC repeat units lie at residues 873–895 (GLLL…KLLS), 959–982 (AAGF…SDLK), 1006–1024 (GAIM…LEVA), and 1099–1124 (GICF…INFL).

The protein belongs to the APC1 family. As to quaternary structure, the APC/C is composed of at least 13 subunits: apc1, apc2, nuc2, apc4, apc5, cut9, apc8, apc10, apc11, hcn1, apc13, apc14 and apc15.

Component of the anaphase-promoting complex/cyclosome (APC/C), a cell cycle-regulated E3 ubiquitin-protein ligase complex that controls progression through mitosis and the G1 phase of the cell cycle. The APC/C is thought to confer substrate specificity and, in the presence of ubiquitin-conjugating E2 enzymes, it catalyzes the formation of protein-ubiquitin conjugates that are subsequently degraded by the 26S proteasome. Mutations to this protein prevent the exit from mitosis. The protein is Anaphase-promoting complex subunit 1 (cut4) of Schizosaccharomyces pombe (strain 972 / ATCC 24843) (Fission yeast).